The following is a 50-amino-acid chain: MAVPKKKMSHSKSNSRKSNWKRKVIKKINFAVTLGKSLSFGKLSKFYLDD.

The protein belongs to the bacterial ribosomal protein bL32 family.

Its subcellular location is the plastid. The chain is Large ribosomal subunit protein bL32c (rpl32) from Euglena longa (Euglenophycean alga).